The following is a 251-amino-acid chain: Probable transcriptional regulatory protein Caul_0780 (251 aa).

The protein belongs to the TACO1 family.

The protein resides in the cytoplasm. The chain is Probable transcriptional regulatory protein Caul_0780 from Caulobacter sp. (strain K31).